Reading from the N-terminus, the 339-residue chain is 3-isopropylmalate dehydrogenase (339 aa).

R87, R97, R124, and D214 together coordinate substrate. Residues D214, D238, and D242 each coordinate Mg(2+). 274–286 provides a ligand contact to NAD(+); that stretch reads GSAPDIAGQGIAD.

It belongs to the isocitrate and isopropylmalate dehydrogenases family. LeuB type 2 subfamily. In terms of assembly, homodimer. Requires Mg(2+) as cofactor. The cofactor is Mn(2+).

The protein localises to the cytoplasm. It catalyses the reaction (2R,3S)-3-isopropylmalate + NAD(+) = 4-methyl-2-oxopentanoate + CO2 + NADH. Its pathway is amino-acid biosynthesis; L-leucine biosynthesis; L-leucine from 3-methyl-2-oxobutanoate: step 3/4. Catalyzes the oxidation of 3-carboxy-2-hydroxy-4-methylpentanoate (3-isopropylmalate) to 3-carboxy-4-methyl-2-oxopentanoate. The product decarboxylates to 4-methyl-2 oxopentanoate. The protein is 3-isopropylmalate dehydrogenase of Mycobacterium ulcerans (strain Agy99).